The primary structure comprises 632 residues: Golgin subfamily A member 8M (632 aa).

The interval 1-77 (MAEETQHNKL…SSATLKDLES (77 aa)) is disordered. A compositionally biased stretch (polar residues) spans 38–50 (TNGSIPQTATSGG). Coiled coils occupy residues 86–154 (LDSR…HMKR) and 209–421 (KLEQ…SLMA). A compositionally biased stretch (basic and acidic residues) spans 352–362 (KQEERIQEQHK). 3 disordered regions span residues 352-384 (KQEERIQEQHKSLQQLAKPQSVFEEPNNENKST), 422-456 (LPGEGHGGEHLDSEGEEAPQPMPSVPEDPESREAM), and 505-524 (DAALGGGHHQAGAQGGDEGE). A compositionally biased stretch (gly residues) spans 508 to 520 (LGGGHHQAGAQGG).

The protein belongs to the GOLGA8 family.

This Homo sapiens (Human) protein is Golgin subfamily A member 8M.